Consider the following 149-residue polypeptide: MSKTLSFKTYSAKPAEVDRKWYVVDAEGQVLGRMASEIAKVLRGKHKPQFTPHIDTGDFIVVTNAEKVALTGKKEEQKSYFSHSQYPGGVKIDHVKDLLKKRPERIIENAVWGMLPHNNLGRQLFRKLKVYAGSEHPHASQAPVEMKVN.

Belongs to the universal ribosomal protein uL13 family. Part of the 50S ribosomal subunit.

This protein is one of the early assembly proteins of the 50S ribosomal subunit, although it is not seen to bind rRNA by itself. It is important during the early stages of 50S assembly. In Pelodictyon phaeoclathratiforme (strain DSM 5477 / BU-1), this protein is Large ribosomal subunit protein uL13.